The primary structure comprises 306 residues: Ribonuclease Z (306 aa).

7 residues coordinate Zn(2+): H63, H65, D67, H68, H141, D211, and H269. D67 functions as the Proton acceptor in the catalytic mechanism.

It belongs to the RNase Z family. In terms of assembly, homodimer. Requires Zn(2+) as cofactor.

The enzyme catalyses Endonucleolytic cleavage of RNA, removing extra 3' nucleotides from tRNA precursor, generating 3' termini of tRNAs. A 3'-hydroxy group is left at the tRNA terminus and a 5'-phosphoryl group is left at the trailer molecule.. Zinc phosphodiesterase, which displays some tRNA 3'-processing endonuclease activity. Probably involved in tRNA maturation, by removing a 3'-trailer from precursor tRNA. The chain is Ribonuclease Z from Staphylococcus epidermidis (strain ATCC 12228 / FDA PCI 1200).